Consider the following 107-residue polypeptide: UPF0145 protein YbjQ (107 aa).

This sequence belongs to the UPF0145 family.

This chain is UPF0145 protein YbjQ, found in Salmonella dublin (strain CT_02021853).